Consider the following 291-residue polypeptide: Release factor glutamine methyltransferase (291 aa).

S-adenosyl-L-methionine contacts are provided by residues 127-131 (GTGSG), aspartate 150, tryptophan 179, and asparagine 196. A substrate-binding site is contributed by 196-199 (NPPY).

This sequence belongs to the protein N5-glutamine methyltransferase family. PrmC subfamily.

It carries out the reaction L-glutaminyl-[peptide chain release factor] + S-adenosyl-L-methionine = N(5)-methyl-L-glutaminyl-[peptide chain release factor] + S-adenosyl-L-homocysteine + H(+). Functionally, methylates the class 1 translation termination release factors RF1/PrfA and RF2/PrfB on the glutamine residue of the universally conserved GGQ motif. This is Release factor glutamine methyltransferase from Thermosynechococcus vestitus (strain NIES-2133 / IAM M-273 / BP-1).